A 325-amino-acid polypeptide reads, in one-letter code: Aquaporin-8 (325 aa).

Residues 1–10 (MALRSPARDY) are Cytoplasmic-facing. The chain crosses the membrane as a helical span at residues 11–31 (LVSMIGELVGTFLFLFFAFAA). Over 32–52 (AQTANQPNGTKPLTPNATDTS) the chain is Extracellular. N-linked (GlcNAc...) asparagine glycans are attached at residues Asn-39 and Asn-47. The helical transmembrane segment at 53 to 73 (KLLYIALAFGASLAANVWVFF) threads the bilayer. Over 74-100 (RVSGGQFNPAVTLALVLIRAVSPTKAL) the chain is Cytoplasmic. The NPA 1 signature appears at 81-83 (NPA). A helical transmembrane segment spans residues 101–121 (ILIPAQLVGGSLAAAAVKGII). Residues 122–140 (PGDDILFAVSLGPGVANVQ) lie on the Extracellular side of the membrane. A helical membrane pass occupies residues 141–161 (GLFIELLLTFMLVFTILMLVA). The Cytoplasmic segment spans residues 162–167 (EKTKST). Residues 168–188 (FVAPIGIGFSLFIGHLVGIFW) traverse the membrane as a helical segment. The Extracellular segment spans residues 189 to 212 (TGAGINPARAFSPALIQASFPSYH). The NPA 2 motif lies at 194–196 (NPA). A helical membrane pass occupies residues 213 to 233 (WIYWLGPALGSFLAAGLYLGL). Residues 234–325 (KEMKYELVGG…GSPDSTDLPT (92 aa)) are Cytoplasmic-facing. Disordered regions lie at residues 279-298 (LGQFEGTTEGHRSPVDLERG) and 305-325 (EDDPHIRKSRYGSPDSTDLPT). A compositionally biased stretch (basic and acidic residues) spans 286-298 (TEGHRSPVDLERG).

The protein belongs to the MIP/aquaporin (TC 1.A.8) family.

The protein resides in the cell membrane. It carries out the reaction H2O2(out) = H2O2(in). The catalysed reaction is H2O(in) = H2O(out). In terms of biological role, plasma membrane water channel that regulates the reactive oxygen species (ROS)-signaling pathway through its capacity to act as a membrane channel for hydrogen peroxide uptake. Required for the formation of infection structures and infection, especially on host leaves where it is essential for the penetration into the host. Regulates the expression of proteins related to redox-regulation and intracellular signal transduction and plays a role in the distribution of mitochondria in the hyphae. This chain is Aquaporin-8, found in Botryotinia fuckeliana (strain B05.10) (Noble rot fungus).